The primary structure comprises 299 residues: Ankyrin repeat domain-containing protein 54 (299 aa).

The disordered stretch occupies residues 1 to 27; the sequence is MAATGGGADDESRSGRSSSDGECAVAP. Ala2 bears the N-acetylalanine mark. Ser62 bears the Phosphoserine mark. The short motif at 98–116 is the Nuclear localization signal (NLS) element; sequence RRLGPTGKEVHALKRLRDS. 4 ANK repeats span residues 108-137, 141-170, 174-203, and 207-239; these read HALK…DPCA, KGRT…DPNQ, LGNT…RVDA, and AGRT…EVKQ. The tract at residues 140 to 240 is LYN-binding; the sequence is DKGRTALHFA…EAVRLEVKQI (101 aa). Positions 282-292 match the Nuclear export signal (NES) motif; that stretch reads LLASFTSLSLQ.

Interacts (via ankyrin repeat region) with LYN (via SH3-domain) in an activation-independent status of LYN. Forms a multiprotein complex with LYN and HCLS1. Interacts with TSN2, VAV1, DBNL and LASP1. Expressed in a variety of hemopoietic cell lines and tissue with high levels in testis. Highly expressed in ciliated cells.

It is found in the nucleus. Its subcellular location is the cytoplasm. The protein localises to the midbody. Its function is as follows. Plays an important role in regulating intracellular signaling events associated with erythroid terminal differentiation. This Mus musculus (Mouse) protein is Ankyrin repeat domain-containing protein 54 (Ankrd54).